A 388-amino-acid chain; its full sequence is MNLHEYQAKELLASYGLPVQGGILAHNGEEAAAAYDKLGGKFAVVKAQVHAGGRGKAGGVKVVKSREKAKEVAESLIGTNLVTYQTDANGQPVNSVLVCEDMYPVQTELYLGAVVDRSTRRVTFMASTEGGVEIEKVAAETPEKIFKVTVDPLVGLQPCQAREVAFQLGLKDKQINEFAKLMTGAYKAFVENDFALFEVNPLAVRENGALACVDGKIGIDSNALYRLPKIAELRDKSQENERELKASEFDLNYVALEGNIGCMVNGAGLAMATMDIIKLKGGQPANFLDVGGGATKDRVVEAFKLILEDKSVKGVLINIFGGIVRCDMIAEAIVAAVKEINVNVPVVVRLEGNNAELGAKILNESGLKLTSADGLNDAAEKIVAAVNA.

Residues K9–K245 enclose the ATP-grasp domain. ATP contacts are provided by residues K46, G53–G55, E100, Y103, and E108. Residues N200 and D214 each contribute to the Mg(2+) site. Substrate-binding positions include N265 and G322 to V324.

It belongs to the succinate/malate CoA ligase beta subunit family. As to quaternary structure, heterotetramer of two alpha and two beta subunits. Mg(2+) is required as a cofactor.

It carries out the reaction succinate + ATP + CoA = succinyl-CoA + ADP + phosphate. The enzyme catalyses GTP + succinate + CoA = succinyl-CoA + GDP + phosphate. Its pathway is carbohydrate metabolism; tricarboxylic acid cycle; succinate from succinyl-CoA (ligase route): step 1/1. Functionally, succinyl-CoA synthetase functions in the citric acid cycle (TCA), coupling the hydrolysis of succinyl-CoA to the synthesis of either ATP or GTP and thus represents the only step of substrate-level phosphorylation in the TCA. The beta subunit provides nucleotide specificity of the enzyme and binds the substrate succinate, while the binding sites for coenzyme A and phosphate are found in the alpha subunit. The polypeptide is Succinate--CoA ligase [ADP-forming] subunit beta (Neisseria gonorrhoeae (strain NCCP11945)).